The sequence spans 484 residues: Calcium uniporter protein, mitochondrial (484 aa).

A mitochondrion-targeting transit peptide spans 1-33 (MGHVLGGTLLAANRLARPPAVVLGKPRVCCWRA). The Mitochondrial matrix segment spans residues 34–304 (SPWPVIVSSA…CDLLAHKGAH (271 aa)). Disordered regions lie at residues 59–104 (ARYE…KGRL) and 188–227 (YTGGNKSNDGRREESNGNGSNVASYSGLGREGPSKGDTHW). A compositionally biased stretch (basic and acidic residues) spans 61–82 (YEARGRSTTQRKVDDRPWHRES). The span at 83 to 93 (SGSLPKSTSPD) shows a compositional bias: polar residues. Residues 305-326 (ALAKGGFAALAAWWGIVYYVTF) traverse the membrane as a helical segment. At 327 to 334 (HTDMGWDL) the chain is on the mitochondrial intermembrane side. The Selectivity filter signature appears at 332–340 (WDLVEPITY). A helical membrane pass occupies residues 335–355 (VEPITYLAGLASIMGGYLWFL). Glu336 is a Ca(2+) binding site. Residues 356-484 (FISRDLSYKA…NEAAANVPGD (129 aa)) are Mitochondrial matrix-facing. Basic and acidic residues-rich tracts occupy residues 426–435 (KEVLEEEKGG) and 452–462 (DHDHDHDHVSH). Residues 426–484 (KEVLEEEKGGKARKREQEDEDGDGDDDHDHDHDHVSHGAELQGQDILHANEAAANVPGD) form a disordered region.

Belongs to the MCU (TC 1.A.77) family. In terms of assembly, homotetramer, assembles in a dimer or dimers configuration with two interfaces.

It localises to the mitochondrion inner membrane. It carries out the reaction Ca(2+)(in) = Ca(2+)(out). Inhibited by ruthenium red or its derivative Ru360. Its function is as follows. Highly selective calcium channel localized to the inner mitochondrial membrane, which mediates calcium uptake into the mitochondrial matrix. Mitochondrial calcium homeostasis plays key roles in cellular physiology and regulates ATP production, cytoplasmic calcium signals and activation of cell death pathways. Sufficient to operate as a pore-forming channel without the need of calcium-sensor or auxiliary subunit. In Metarhizium acridum (strain CQMa 102), this protein is Calcium uniporter protein, mitochondrial.